The following is a 335-amino-acid chain: Calcium/calmodulin-dependent protein kinase type I (335 aa).

The 261-residue stretch at 31-291 (YRVGRVLGGG…AADALKHPFL (261 aa)) folds into the Protein kinase domain. 37–45 (LGGGTYATV) serves as a coordination point for ATP. Asp-154 (proton acceptor) is an active-site residue. Phosphothreonine; by autocatalysis is present on Thr-192. The interval 310 to 334 (NARKTFRTAYNAVRAFNTWKKLENK) is calmodulin-binding.

This sequence belongs to the protein kinase superfamily. CAMK Ser/Thr protein kinase family. CaMK subfamily.

Its subcellular location is the cytoplasm. It carries out the reaction L-seryl-[protein] + ATP = O-phospho-L-seryl-[protein] + ADP + H(+). It catalyses the reaction L-threonyl-[protein] + ATP = O-phospho-L-threonyl-[protein] + ADP + H(+). In terms of biological role, important in cell cycle regulation. The polypeptide is Calcium/calmodulin-dependent protein kinase type I (cmk1) (Schizosaccharomyces pombe (strain 972 / ATCC 24843) (Fission yeast)).